A 327-amino-acid polypeptide reads, in one-letter code: Ribose-phosphate pyrophosphokinase (327 aa).

ATP-binding positions include 40–42 and 99–100; these read DGE and RQ. Residues His134 and Asp173 each contribute to the Mg(2+) site. Lys196 is a catalytic residue. D-ribose 5-phosphate contacts are provided by residues Arg198, Asp222, and 226-230; that span reads DTANT.

Belongs to the ribose-phosphate pyrophosphokinase family. Class I subfamily. Homohexamer. Mg(2+) serves as cofactor.

It localises to the cytoplasm. The catalysed reaction is D-ribose 5-phosphate + ATP = 5-phospho-alpha-D-ribose 1-diphosphate + AMP + H(+). It participates in metabolic intermediate biosynthesis; 5-phospho-alpha-D-ribose 1-diphosphate biosynthesis; 5-phospho-alpha-D-ribose 1-diphosphate from D-ribose 5-phosphate (route I): step 1/1. Functionally, involved in the biosynthesis of the central metabolite phospho-alpha-D-ribosyl-1-pyrophosphate (PRPP) via the transfer of pyrophosphoryl group from ATP to 1-hydroxyl of ribose-5-phosphate (Rib-5-P). The sequence is that of Ribose-phosphate pyrophosphokinase from Neisseria meningitidis serogroup A / serotype 4A (strain DSM 15465 / Z2491).